Consider the following 83-residue polypeptide: Kunitz-type serine protease inhibitor A (83 aa).

A signal peptide spans 1–24 (MSSGGLLLLLGLLTLCAELTPVSS). The BPTI/Kunitz inhibitor domain maps to 31–81 (CNVPPEPGRCNANVRAFYYNPRLRKCIEFTYGGCGGNANNFKSRGECKRTC). 3 disulfide bridges follow: Cys-31–Cys-81, Cys-40–Cys-64, and Cys-56–Cys-77.

This sequence belongs to the venom Kunitz-type family. In terms of tissue distribution, expressed by the venom gland.

The protein localises to the secreted. Functionally, serine protease inhibitor. The sequence is that of Kunitz-type serine protease inhibitor A from Bungarus candidus (Malayan krait).